The primary structure comprises 252 residues: Chitooligosaccharide deacetylase (252 aa).

The Mg(2+) site is built by His61 and His125.

The protein belongs to the YdjC deacetylase family. ChbG subfamily. As to quaternary structure, homodimer. It depends on Mg(2+) as a cofactor.

It localises to the cytoplasm. The enzyme catalyses N,N'-diacetylchitobiose + H2O = N-acetyl-beta-D-glucosaminyl-(1-&gt;4)-D-glucosamine + acetate. The catalysed reaction is diacetylchitobiose-6'-phosphate + H2O = N'-monoacetylchitobiose-6'-phosphate + acetate. It participates in glycan degradation; chitin degradation. Involved in the degradation of chitin. ChbG is essential for growth on the acetylated chitooligosaccharides chitobiose and chitotriose but is dispensable for growth on cellobiose and chitosan dimer, the deacetylated form of chitobiose. Deacetylation of chitobiose-6-P and chitotriose-6-P is necessary for both the activation of the chb promoter by the regulatory protein ChbR and the hydrolysis of phosphorylated beta-glucosides by the phospho-beta-glucosidase ChbF. Catalyzes the removal of only one acetyl group from chitobiose-6-P to yield monoacetylchitobiose-6-P, the inducer of ChbR and the substrate of ChbF. The polypeptide is Chitooligosaccharide deacetylase (Salmonella enteritidis PT4 (strain P125109)).